A 2032-amino-acid chain; its full sequence is Cytoskeleton-associated protein 5 (2032 aa).

TOG stretches follow at residues 1 to 223 and 268 to 502; these read MGDD…KLPT and YELL…LIHG. An N6-acetyllysine modification is found at lysine 48. HEAT repeat units lie at residues 159–197, 356–394, and 434–472; these read IILL…WIRD, GQYA…TTTL, and KSLL…VVGE. A disordered region spans residues 516–579; sequence PLPGRTAASG…GTKNKKGLET (64 aa). Residues 543-554 show a composition bias toward low complexity; that stretch reads LKKAPAAKAGGP. Residues 588–817 form a TOG 3 region; the sequence is SIEVCEEKAS…EFEKMQGQSP (230 aa). An HEAT 4 repeat occupies 750–788; that stretch reads GLNVKAFISNVKTALAATNPAVRTAAITLLGVMYLYVGP. The tract at residues 811 to 851 is disordered; that stretch reads KMQGQSPPAPTRGISKHSTSGTDEGEDGDEPDDGSNDVVDL. A phosphoserine mark is found at serine 816 and serine 845. A compositionally biased stretch (acidic residues) spans 833-845; that stretch reads DEGEDGDEPDDGS. TOG regions lie at residues 853–1081 and 1193–1428; these read PRTE…VNMP and IEQL…KRPS. HEAT repeat units follow at residues 855 to 893, 936 to 974, and 1013 to 1051; these read TEIS…DAKF, KQHV…QTGM, and PTDL…HLGY. Residues 1077-1160 are disordered; that stretch reads KVNMPAKPAP…KEDEDKSGPI (84 aa). 3 HEAT repeats span residues 1284 to 1322, 1324 to 1357, and 1361 to 1399; these read ENEA…VYPA, KMFP…SYGM, and QPTP…VHGD. The tract at residues 1422 to 1443 is disordered; that stretch reads RSAKRPSAAPIKQVEEKPQRAQ. A Phosphoserine modification is found at serine 1469. Positions 1801-1822 are disordered; it reads SMDQTGSKSDKETEKGASRIDE. The segment covering 1808 to 1822 has biased composition (basic and acidic residues); the sequence is KSDKETEKGASRIDE. Residue serine 1861 is modified to Phosphoserine. Residues 1932 to 1957 form an interaction with TACC3 region; sequence PSVYLERLKILRQRCGLDNTKQDDRP. Residues 1949–2032 are disordered; it reads DNTKQDDRPP…RLERIKSSRK (84 aa). Residues 1971–1983 are compositionally biased toward polar residues; the sequence is VASSTDMLHSKLS. Residues 1984–1997 show a composition bias toward basic and acidic residues; the sequence is QLRESREQHQHSDL. Low complexity predominate over residues 2002-2014; the sequence is THSSGTVTSSSST. Residues 2018–2032 show a composition bias toward basic and acidic residues; it reads DDLKKRLERIKSSRK.

It belongs to the TOG/XMAP215 family. In terms of assembly, interacts with TACC1. Interacts with SLAIN2 and SLAIN1. Interacts with HNRNPA2B1. Interacts with TACC3 independently of clathrin. Interacts with TACC3 and clathrin forming the TACC3/ch-TOG/clathrin complex located at spindle inter-microtubules bridges. Interacts with NDC80; indicative for an association with the NDC80 complex. As to expression, overexpressed in hepatomas and colonic tumors. Also expressed in skeletal muscle, brain, heart, placenta, lung, liver, kidney and pancreas. Expression is elevated in the brain; highly expressed in the Purkinje cell bodies of the cerebellum.

The protein resides in the cytoplasm. It localises to the cytoskeleton. It is found in the microtubule organizing center. The protein localises to the centrosome. Its subcellular location is the spindle pole. The protein resides in the spindle. It localises to the chromosome. It is found in the centromere. The protein localises to the kinetochore. Its function is as follows. Binds to the plus end of microtubules and regulates microtubule dynamics and microtubule organization. Acts as a processive microtubule polymerase. Promotes cytoplasmic microtubule nucleation and elongation. Plays a major role in organizing spindle poles. In spindle formation protects kinetochore microtubules from depolymerization by KIF2C and has an essential role in centrosomal microtubule assembly independently of KIF2C activity. Contributes to centrosome integrity. Acts as a component of the TACC3/ch-TOG/clathrin complex proposed to contribute to stabilization of kinetochore fibers of the mitotic spindle by acting as inter-microtubule bridge. The TACC3/ch-TOG/clathrin complex is required for the maintenance of kinetochore fiber tension. Enhances the strength of NDC80 complex-mediated kinetochore-tip microtubule attachments. The chain is Cytoskeleton-associated protein 5 (CKAP5) from Homo sapiens (Human).